A 296-amino-acid chain; its full sequence is Telomere repeat-binding factor 4 (296 aa).

Positions 1–62 constitute an HTH myb-type domain; it reads MGNQKLKWTA…WRNLSVAPGI (62 aa). The segment at residues 28 to 58 is a DNA-binding region (H-T-H motif); the sequence is WKNILRDPELAEQLSSRSNIDLKDKWRNLSV. In terms of domain architecture, H15 spans 126–200; it reads NAPRYDGMIF…STQNFYKMND (75 aa). Positions 197 to 232 are disordered; the sequence is KMNDNSLVQRTPHVARPKESNTKSRQQTNSQGPSIS. The span at 219–232 shows a compositional bias: polar residues; the sequence is KSRQQTNSQGPSIS. Residues 245–282 adopt a coiled-coil conformation; the sequence is KLVEVENKLDVSKGAAEEIERLMKLAEEADEMLVIARE.

The protein belongs to the histone H1/H5 family. SMH subfamily.

The protein localises to the nucleus. The protein resides in the chromosome. Functionally, binds preferentially double-stranded telomeric repeats. The chain is Telomere repeat-binding factor 4 from Arabidopsis thaliana (Mouse-ear cress).